Reading from the N-terminus, the 273-residue chain is Nicotinamide N-methyltransferase (273 aa).

S-adenosyl-L-methionine is bound by residues Tyr-35, Tyr-40, 74 to 75, Tyr-80, Asp-96, Asn-101, and 152 to 153; these read GA and NV.

It belongs to the class I-like SAM-binding methyltransferase superfamily. NNMT/PNMT/TEMT family.

The enzyme catalyses nicotinamide + S-adenosyl-L-methionine = 1-methylnicotinamide + S-adenosyl-L-homocysteine. Functionally, catalyzes the N-methylation of nicotinamide and other pyridines to form pyridinium ions. Involved in regulation of lifespan extension downstream of the sirtuin sir-2.1, probably through its role in nicotinic acid metabolism. This is Nicotinamide N-methyltransferase from Caenorhabditis elegans.